A 344-amino-acid chain; its full sequence is Flavonoid 7-O-methyltransferase 1A (344 aa).

D211 serves as a coordination point for S-adenosyl-L-methionine. Residue H249 is the Proton acceptor of the active site.

Belongs to the class I-like SAM-binding methyltransferase superfamily. Cation-independent O-methyltransferase family. As to quaternary structure, homodimer.

It carries out the reaction apigenin + S-adenosyl-L-methionine = genkwanin + S-adenosyl-L-homocysteine + H(+). The enzyme catalyses luteolin + S-adenosyl-L-methionine = luteolin 7-methyl ether + S-adenosyl-L-homocysteine + H(+). The catalysed reaction is quercetin + S-adenosyl-L-methionine = rhamnetin + S-adenosyl-L-homocysteine + H(+). It catalyses the reaction (2S)-naringenin + S-adenosyl-L-methionine = (2S)-sakuranetin + S-adenosyl-L-homocysteine + H(+). It carries out the reaction kaempferol + S-adenosyl-L-methionine = kaempferol 7-methyl ether + S-adenosyl-L-homocysteine + H(+). The enzyme catalyses isorhamnetin + S-adenosyl-L-methionine = rhamnacene + S-adenosyl-L-homocysteine + H(+). The catalysed reaction is 4',7,8-trihydroxyflavone + S-adenosyl-L-methionine = 4',8-dihydroxy-7-methoxyflavone + S-adenosyl-L-homocysteine. It catalyses the reaction scutellarein + S-adenosyl-L-methionine = scutellarein 7-methyl ether + S-adenosyl-L-homocysteine. The protein operates within flavonoid metabolism. Flavonoid 7-O-methyltransferase involved in the biosynthesis of polymethoxylated flavonoids natural products such as pebrellin, aroma compounds which contribute to the flavor of peppermint, and exhibit pharmacological activities such as anti-allergic, anti-oxidant, antibacterial, anti-proliferative, and anti-inflammatory effects. Catalyzes S-adenosylmethionine-dependent regioselective 7-O-methylation of flavonoids; active on various hydroxylated flavonoid substrates, including luteolin (LUT), quercetin, kaempferol, isorhamnetin, apigenin (API), scutellarein (6-hydroxy-apigenin, 6-OH-API, SCU), 7,8,4'-trihydroxy-flavone and naringenin (NAR), and, with a lower efficiency, 7,8,3',4'-tetrahydroxy-flavone, taxifolin, hesperetin and genistein. The chain is Flavonoid 7-O-methyltransferase 1A from Mentha piperita (Peppermint).